Here is a 307-residue protein sequence, read N- to C-terminus: Elongation factor Ts (307 aa).

Positions T80–V83 are involved in Mg(2+) ion dislocation from EF-Tu.

It belongs to the EF-Ts family.

It localises to the cytoplasm. In terms of biological role, associates with the EF-Tu.GDP complex and induces the exchange of GDP to GTP. It remains bound to the aminoacyl-tRNA.EF-Tu.GTP complex up to the GTP hydrolysis stage on the ribosome. The polypeptide is Elongation factor Ts (Methylobacterium nodulans (strain LMG 21967 / CNCM I-2342 / ORS 2060)).